Consider the following 97-residue polypeptide: Putative mitochondrial import inner membrane translocase subunit Tim8 A-B (97 aa).

The Twin CX3C motif signature appears at 43-66 (CWEKCMDKPGPRLDGRAELCLVNC). Intrachain disulfides connect cysteine 43/cysteine 66 and cysteine 47/cysteine 62.

This sequence belongs to the small Tim family. Heterohexamer; possibly composed of 3 copies of TIMM8AB and 3 copies of TIMM13.

It localises to the mitochondrion inner membrane. Functionally, putative mitochondrial intermembrane chaperone that participates in the import and insertion of some multi-pass transmembrane proteins into the mitochondrial inner membrane. Also required for the transfer of beta-barrel precursors from the TOM complex to the sorting and assembly machinery (SAM complex) of the outer membrane. Acts as a chaperone-like protein that protects the hydrophobic precursors from aggregation and guide them through the mitochondrial intermembrane space. This is Putative mitochondrial import inner membrane translocase subunit Tim8 A-B (Timm8a2) from Mus musculus (Mouse).